A 547-amino-acid chain; its full sequence is Chaperonin GroEL (547 aa).

ATP is bound by residues 30-33 (TLGP), lysine 51, 87-91 (DGTTT), glycine 415, 479-481 (NAA), and aspartate 495. Residues 524–547 (APKKDEPTPPAAGGGMGGMGGMDF) form a disordered region. Residues 535–547 (AGGGMGGMGGMDF) are compositionally biased toward gly residues.

The protein belongs to the chaperonin (HSP60) family. In terms of assembly, forms a cylinder of 14 subunits composed of two heptameric rings stacked back-to-back. Interacts with the co-chaperonin GroES.

The protein resides in the cytoplasm. The enzyme catalyses ATP + H2O + a folded polypeptide = ADP + phosphate + an unfolded polypeptide.. Together with its co-chaperonin GroES, plays an essential role in assisting protein folding. The GroEL-GroES system forms a nano-cage that allows encapsulation of the non-native substrate proteins and provides a physical environment optimized to promote and accelerate protein folding. This Xylella fastidiosa (strain 9a5c) protein is Chaperonin GroEL.